The chain runs to 137 residues: Basic phospholipase A2 beta-bungarotoxin A-AL4 chain (137 aa).

Positions 1-10 (LAVCVSLLGA) are cleaved as a signal peptide. Positions 11–18 (ANIPPQHL) are excised as a propeptide. 6 disulfides stabilise this stretch: C45/C137, C47/C63, C62/C118, C69/C111, C79/C104, and C97/C109. Residues Y46, G48, and G50 each coordinate Ca(2+). The active site involves H66. Position 67 (D67) interacts with Ca(2+). D112 is a catalytic residue.

Belongs to the phospholipase A2 family. Group I subfamily. D49 sub-subfamily. As to quaternary structure, heterodimer; disulfide-linked. The A chains have phospholipase A2 activity and the B chains show homology with the basic protease inhibitors. The cofactor is Ca(2+). In terms of tissue distribution, expressed by the venom gland.

The protein resides in the secreted. It catalyses the reaction a 1,2-diacyl-sn-glycero-3-phosphocholine + H2O = a 1-acyl-sn-glycero-3-phosphocholine + a fatty acid + H(+). In terms of biological role, snake venom phospholipase A2 (PLA2) that inhibits neuromuscular transmission by blocking acetylcholine release from the nerve termini. PLA2 catalyzes the calcium-dependent hydrolysis of the 2-acyl groups in 3-sn-phosphoglycerides. This is Basic phospholipase A2 beta-bungarotoxin A-AL4 chain from Bungarus multicinctus (Many-banded krait).